A 482-amino-acid polypeptide reads, in one-letter code: Probable metalloreductase AIM14 (482 aa).

7 consecutive transmembrane segments (helical) span residues 16–36 (VKYG…VATV), 50–70 (SLPW…LGVW), 87–106 (GRMA…KYWP), 123–143 (IIVV…FVEG), 155–175 (LLGV…VALF), 182–202 (LFYV…LFHA), and 205–225 (PVTL…FIKF). The Ferric oxidoreductase domain maps to 86–198 (FGRMAYCLLP…ITIGMFVVLI (113 aa)). The FAD-binding FR-type domain occupies 225 to 348 (FQTYSATPVS…GGSGISLAIP (124 aa)).

Belongs to the ferric reductase (FRE) family. AIM14 subfamily.

The protein localises to the membrane. In terms of biological role, probable cell surface metalloreductase. May be involved in iron or copper homeostasis. The chain is Probable metalloreductase AIM14 (AIM14) from Meyerozyma guilliermondii (strain ATCC 6260 / CBS 566 / DSM 6381 / JCM 1539 / NBRC 10279 / NRRL Y-324) (Yeast).